The primary structure comprises 175 residues: NADH-ubiquinone oxidoreductase chain 6 (175 aa).

5 helical membrane passes run 1–21 (MMLY…VGFS), 25–45 (SPIY…GIVL), 47–67 (FGGS…MMVV), 88–108 (AVLG…YYVL), and 149–169 (YGTW…VVIM).

Belongs to the complex I subunit 6 family. In terms of assembly, core subunit of respiratory chain NADH dehydrogenase (Complex I) which is composed of 45 different subunits.

The protein localises to the mitochondrion inner membrane. It carries out the reaction a ubiquinone + NADH + 5 H(+)(in) = a ubiquinol + NAD(+) + 4 H(+)(out). Functionally, core subunit of the mitochondrial membrane respiratory chain NADH dehydrogenase (Complex I) which catalyzes electron transfer from NADH through the respiratory chain, using ubiquinone as an electron acceptor. Essential for the catalytic activity and assembly of complex I. This chain is NADH-ubiquinone oxidoreductase chain 6 (MT-ND6), found in Bos indicus (Zebu).